The primary structure comprises 319 residues: Acetyl-coenzyme A carboxylase carboxyl transferase subunit alpha (319 aa).

One can recognise a CoA carboxyltransferase C-terminal domain in the interval 32 to 293 (NIQEEISRLQ…HTALAEALQT (262 aa)).

The protein belongs to the AccA family. As to quaternary structure, acetyl-CoA carboxylase is a heterohexamer composed of biotin carboxyl carrier protein (AccB), biotin carboxylase (AccC) and two subunits each of ACCase subunit alpha (AccA) and ACCase subunit beta (AccD).

It is found in the cytoplasm. The catalysed reaction is N(6)-carboxybiotinyl-L-lysyl-[protein] + acetyl-CoA = N(6)-biotinyl-L-lysyl-[protein] + malonyl-CoA. Its pathway is lipid metabolism; malonyl-CoA biosynthesis; malonyl-CoA from acetyl-CoA: step 1/1. Functionally, component of the acetyl coenzyme A carboxylase (ACC) complex. First, biotin carboxylase catalyzes the carboxylation of biotin on its carrier protein (BCCP) and then the CO(2) group is transferred by the carboxyltransferase to acetyl-CoA to form malonyl-CoA. This chain is Acetyl-coenzyme A carboxylase carboxyl transferase subunit alpha, found in Thioalkalivibrio sulfidiphilus (strain HL-EbGR7).